Here is a 370-residue protein sequence, read N- to C-terminus: ADP-ribosylation factor-like protein 13B (370 aa).

Residues cysteine 12, cysteine 13, cysteine 14, and cysteine 15 are each lipidated (S-palmitoyl cysteine). Residues 31-38 (GIGSAGKT), 75-79 (DVGGD), and 134-137 (NNQN) each bind GTP. Lysine 239 participates in a covalent cross-link: Glycyl lysine isopeptide (Lys-Gly) (interchain with G-Cter in SUMO). Residues 255-331 (RNQPPVQPPI…PVSPESNSVK (77 aa)) are disordered. Pro residues predominate over residues 259 to 271 (PVQPPIPPDPPSD). Composition is skewed to polar residues over residues 287-303 (LASS…TPET) and 314-328 (RISQ…PESN). Lysine 331 is covalently cross-linked (Glycyl lysine isopeptide (Lys-Gly) (interchain with G-Cter in SUMO)). An RVVP region region spans residues 366-369 (RVVP).

Belongs to the small GTPase superfamily. Arf family. In terms of assembly, monomer. Sumoylation regulates the targeting of membrane sensory receptors to the cilium. In terms of tissue distribution, specifically expressed in ciliated sensory neurons throughout development in both hermaphrodites.

Its subcellular location is the cell projection. The protein resides in the cilium membrane. Cilium-specific protein required to control the microtubule-based, ciliary axoneme structure. Required for normal sensory cilium function. May act by maintaining the association between IFT subcomplexes A and B. This chain is ADP-ribosylation factor-like protein 13B (arl-13), found in Caenorhabditis elegans.